Here is a 949-residue protein sequence, read N- to C-terminus: AP-1 complex subunit beta-1 (949 aa).

Lysine 318 is subject to N6-acetyllysine. Tyrosine 574 is subject to 3'-nitrotyrosine. Residues 592–623 are disordered; that stretch reads SLPPRTASSESTESPEAAPAGAPASDQPDVIP. Residues 594–616 show a composition bias toward low complexity; the sequence is PPRTASSESTESPEAAPAGAPAS.

It belongs to the adaptor complexes large subunit family. Adaptor protein complex 1 (AP-1) is a heterotetramer composed of two large adaptins (gamma-type subunit AP1G1 and beta-type subunit AP1B1), a medium adaptin (mu-type subunit AP1M1 or AP1M2) and a small adaptin (sigma-type subunit AP1S1 or AP1S2 or AP1S3). The N-terminus is blocked.

It localises to the golgi apparatus. The protein localises to the cytoplasmic vesicle. It is found in the clathrin-coated vesicle membrane. In terms of biological role, subunit of clathrin-associated adaptor protein complex 1 that plays a role in protein sorting in the late-Golgi/trans-Golgi network (TGN) and/or endosomes. The AP complexes mediate both the recruitment of clathrin to membranes and the recognition of sorting signals within the cytosolic tails of transmembrane cargo molecules. This Rattus norvegicus (Rat) protein is AP-1 complex subunit beta-1 (Ap1b1).